Consider the following 309-residue polypeptide: MPIRVLDELPAVNFLREENVFVMTTSRAPGQEIRPLKVLILNLMPKKIETENQFLRLLSNSPLQVDIQLLRIDARESRNTPAEHLNNFYCNFDDICDQNFDGLIVTGAPLGLVEFNDVAYWPQIRQVLEWAKDHVTSTLFVCWAVQAALNILYGIPKQTRTDKLSGVYEHHILHPHALLTRGFDDSFLAPHSRYADFPAALIRDYTDLEILAETEEGDAYLFASKDKRIAFVTGHPEYDAHTLAGEYFRDVEAGLNPEVPYNYFPKNDPQNIPRATWRSHGNLLFTNWLNYYVYQITPYDLRHMNPTLD.

The active-site Acyl-thioester intermediate is the cysteine 142. Lysine 163 and serine 192 together coordinate substrate. Residue histidine 235 is the Proton acceptor of the active site. Glutamate 237 is an active-site residue. A substrate-binding site is contributed by arginine 249.

Belongs to the MetA family. In terms of assembly, homodimer.

It localises to the cytoplasm. It carries out the reaction L-homoserine + succinyl-CoA = O-succinyl-L-homoserine + CoA. Its pathway is amino-acid biosynthesis; L-methionine biosynthesis via de novo pathway; O-succinyl-L-homoserine from L-homoserine: step 1/1. In terms of biological role, transfers a succinyl group from succinyl-CoA to L-homoserine, forming succinyl-L-homoserine. This Salmonella gallinarum (strain 287/91 / NCTC 13346) protein is Homoserine O-succinyltransferase.